A 164-amino-acid polypeptide reads, in one-letter code: Phosphopantetheine adenylyltransferase (164 aa).

Ser10 lines the substrate pocket. ATP-binding positions include 10–11 and His18; that span reads SF. Residues Lys42, Met74, and Arg88 each contribute to the substrate site. Residues 89–91, Glu99, and 124–130 contribute to the ATP site; these read GLR and YFFVSAR.

This sequence belongs to the bacterial CoaD family. As to quaternary structure, homohexamer. Requires Mg(2+) as cofactor.

Its subcellular location is the cytoplasm. It catalyses the reaction (R)-4'-phosphopantetheine + ATP + H(+) = 3'-dephospho-CoA + diphosphate. It participates in cofactor biosynthesis; coenzyme A biosynthesis; CoA from (R)-pantothenate: step 4/5. Its function is as follows. Reversibly transfers an adenylyl group from ATP to 4'-phosphopantetheine, yielding dephospho-CoA (dPCoA) and pyrophosphate. This Anaeromyxobacter dehalogenans (strain 2CP-C) protein is Phosphopantetheine adenylyltransferase.